We begin with the raw amino-acid sequence, 329 residues long: Fructose-1,6-bisphosphatase class 1 (329 aa).

4 residues coordinate Mg(2+): E84, D103, L105, and D106. Substrate contacts are provided by residues 106–109 (DGSS), N196, and K262. E268 lines the Mg(2+) pocket.

It belongs to the FBPase class 1 family. As to quaternary structure, homotetramer. Requires Mg(2+) as cofactor.

It is found in the cytoplasm. It carries out the reaction beta-D-fructose 1,6-bisphosphate + H2O = beta-D-fructose 6-phosphate + phosphate. It functions in the pathway carbohydrate biosynthesis; gluconeogenesis. This Shewanella woodyi (strain ATCC 51908 / MS32) protein is Fructose-1,6-bisphosphatase class 1.